The following is a 31-amino-acid chain: GIPCGESCVFIPCTITALLGCSCKDKVCYKN.

The cyclopeptide (Gly-Asn) cross-link spans 1–31; the sequence is GIPCGESCVFIPCTITALLGCSCKDKVCYKN. 3 disulfide bridges follow: cysteine 4-cysteine 21, cysteine 8-cysteine 23, and cysteine 13-cysteine 28.

In terms of processing, contains 3 disulfide bonds. This is a cyclic peptide. In terms of tissue distribution, expressed in seed but not in root, nodule, flower, stem, shoot, leaf and pod (at protein level).

Functionally, probably participates in a plant defense mechanism. In Clitoria ternatea (Butterfly pea), this protein is Cliotide T11.